Reading from the N-terminus, the 667-residue chain is DNA ligase (667 aa).

NAD(+) is bound by residues 34–38, 83–84, and E114; these read DQEYD and SL. The active-site N6-AMP-lysine intermediate is K116. R137, E170, K286, and K310 together coordinate NAD(+). Residues C404, C407, C422, and C427 each coordinate Zn(2+). Residues 588–667 form the BRCT domain; that stretch reads HLAQKFENYR…EFQQLLSKED (80 aa).

It belongs to the NAD-dependent DNA ligase family. LigA subfamily. Mg(2+) is required as a cofactor. The cofactor is Mn(2+).

The enzyme catalyses NAD(+) + (deoxyribonucleotide)n-3'-hydroxyl + 5'-phospho-(deoxyribonucleotide)m = (deoxyribonucleotide)n+m + AMP + beta-nicotinamide D-nucleotide.. In terms of biological role, DNA ligase that catalyzes the formation of phosphodiester linkages between 5'-phosphoryl and 3'-hydroxyl groups in double-stranded DNA using NAD as a coenzyme and as the energy source for the reaction. It is essential for DNA replication and repair of damaged DNA. This Spiroplasma citri protein is DNA ligase.